The chain runs to 273 residues: Putative pyruvate, phosphate dikinase regulatory protein (273 aa).

149–156 (GPSRTSKT) provides a ligand contact to ADP.

The protein belongs to the pyruvate, phosphate/water dikinase regulatory protein family. PDRP subfamily.

It catalyses the reaction N(tele)-phospho-L-histidyl/L-threonyl-[pyruvate, phosphate dikinase] + ADP = N(tele)-phospho-L-histidyl/O-phospho-L-threonyl-[pyruvate, phosphate dikinase] + AMP + H(+). The catalysed reaction is N(tele)-phospho-L-histidyl/O-phospho-L-threonyl-[pyruvate, phosphate dikinase] + phosphate + H(+) = N(tele)-phospho-L-histidyl/L-threonyl-[pyruvate, phosphate dikinase] + diphosphate. Its function is as follows. Bifunctional serine/threonine kinase and phosphorylase involved in the regulation of the pyruvate, phosphate dikinase (PPDK) by catalyzing its phosphorylation/dephosphorylation. In Rickettsia akari (strain Hartford), this protein is Putative pyruvate, phosphate dikinase regulatory protein.